A 190-amino-acid chain; its full sequence is T-cell receptor gamma chain C region 5/10-13 (190 aa).

The tract at residues 1–157 is c region; the sequence is DKRTDSDFSP…LQVTTTYAFY (157 aa). A helical transmembrane segment spans residues 158–178; it reads TYLILFFKSMVHLAFVVFCLF. Over 179–190 the chain is Cytoplasmic; sequence RRAAMSCDDQRS.

Its subcellular location is the membrane. In Mus musculus (Mouse), this protein is T-cell receptor gamma chain C region 5/10-13.